We begin with the raw amino-acid sequence, 106 residues long: MRRRSSMDINRAIRVAVDTGNVVLGTKQAIKNIKHGEGQLVIVADNCAKDVKEDIFYYTKLSETPVYTHQATSIELGAICGKPFPVSALLVLEPGNSAILNVNNEE.

The protein belongs to the eukaryotic ribosomal protein eL30 family.

The polypeptide is Large ribosomal subunit protein eL30 (Methanococcus maripaludis (strain C5 / ATCC BAA-1333)).